A 192-amino-acid chain; its full sequence is Ion-translocating oxidoreductase complex subunit A (192 aa).

A run of 6 helical transmembrane segments spans residues 5–25 (LLLL…FLGL), 39–59 (IGMS…SYLV), 65–85 (LPFD…AVVV), 102–122 (ALGI…VALL), 134–154 (AIYG…FSAM), and 171–191 (AIAM…TGLV).

The protein belongs to the NqrDE/RnfAE family. In terms of assembly, the complex is composed of six subunits: RnfA, RnfB, RnfC, RnfD, RnfE and RnfG.

The protein localises to the cell inner membrane. Functionally, part of a membrane-bound complex that couples electron transfer with translocation of ions across the membrane. This chain is Ion-translocating oxidoreductase complex subunit A, found in Shewanella putrefaciens (strain CN-32 / ATCC BAA-453).